A 218-amino-acid polypeptide reads, in one-letter code: Imidazole glycerol phosphate synthase subunit HisH (218 aa).

One can recognise a Glutamine amidotransferase type-1 domain in the interval 1-213; that stretch reads MTTIIDYGIG…AALPTTEEAG (213 aa). Residue Cys79 is the Nucleophile of the active site. Catalysis depends on residues His188 and Glu190.

Heterodimer of HisH and HisF.

It localises to the cytoplasm. The enzyme catalyses 5-[(5-phospho-1-deoxy-D-ribulos-1-ylimino)methylamino]-1-(5-phospho-beta-D-ribosyl)imidazole-4-carboxamide + L-glutamine = D-erythro-1-(imidazol-4-yl)glycerol 3-phosphate + 5-amino-1-(5-phospho-beta-D-ribosyl)imidazole-4-carboxamide + L-glutamate + H(+). It carries out the reaction L-glutamine + H2O = L-glutamate + NH4(+). It participates in amino-acid biosynthesis; L-histidine biosynthesis; L-histidine from 5-phospho-alpha-D-ribose 1-diphosphate: step 5/9. Its function is as follows. IGPS catalyzes the conversion of PRFAR and glutamine to IGP, AICAR and glutamate. The HisH subunit catalyzes the hydrolysis of glutamine to glutamate and ammonia as part of the synthesis of IGP and AICAR. The resulting ammonia molecule is channeled to the active site of HisF. The sequence is that of Imidazole glycerol phosphate synthase subunit HisH from Salinibacter ruber (strain DSM 13855 / M31).